Consider the following 68-residue polypeptide: Large ribosomal subunit protein uL30 (68 aa).

It belongs to the universal ribosomal protein uL30 family. In terms of assembly, part of the 50S ribosomal subunit.

The sequence is that of Large ribosomal subunit protein uL30 from Agrobacterium fabrum (strain C58 / ATCC 33970) (Agrobacterium tumefaciens (strain C58)).